Here is a 347-residue protein sequence, read N- to C-terminus: N-acetyl-gamma-glutamyl-phosphate reductase (347 aa).

C152 is an active-site residue.

Belongs to the NAGSA dehydrogenase family. Type 1 subfamily.

The protein resides in the cytoplasm. It carries out the reaction N-acetyl-L-glutamate 5-semialdehyde + phosphate + NADP(+) = N-acetyl-L-glutamyl 5-phosphate + NADPH + H(+). Its pathway is amino-acid biosynthesis; L-arginine biosynthesis; N(2)-acetyl-L-ornithine from L-glutamate: step 3/4. Catalyzes the NADPH-dependent reduction of N-acetyl-5-glutamyl phosphate to yield N-acetyl-L-glutamate 5-semialdehyde. This Neisseria meningitidis serogroup A / serotype 4A (strain DSM 15465 / Z2491) protein is N-acetyl-gamma-glutamyl-phosphate reductase.